A 195-amino-acid chain; its full sequence is Small ribosomal subunit protein uS5 (195 aa).

The S5 DRBM domain occupies 22–85 (IVEKLVHINR…EEAKKSMIRV (64 aa)). The disordered stretch occupies residues 164 to 195 (QVAAKRGKKVSDVIGRRADGASAAQPAADAEG). The span at 172–182 (KVSDVIGRRAD) shows a compositional bias: basic and acidic residues. The segment covering 183 to 195 (GASAAQPAADAEG) has biased composition (low complexity).

The protein belongs to the universal ribosomal protein uS5 family. As to quaternary structure, part of the 30S ribosomal subunit. Contacts proteins S4 and S8.

Its function is as follows. With S4 and S12 plays an important role in translational accuracy. Located at the back of the 30S subunit body where it stabilizes the conformation of the head with respect to the body. The chain is Small ribosomal subunit protein uS5 from Phenylobacterium zucineum (strain HLK1).